Reading from the N-terminus, the 119-residue chain is MKQANQDRGTLLLALVAGLSINGTFAALFSSIVPFSVFPIISLVLTVYCLHQRYLNRTMPVGLPGLAAACFILGVLLYSTVVRAEYPDIGSNFFPAVLSVIMVFWIGAKMRNRKQEVAE.

At Met-1–Arg-8 the chain is on the cytoplasmic side. Residues Gly-9–Leu-28 form a helical membrane-spanning segment. At Phe-29–Ser-31 the chain is on the periplasmic side. The chain crosses the membrane as a helical span at residues Ile-32–Leu-50. Residues His-51–Val-61 lie on the Cytoplasmic side of the membrane. Residues Gly-62 to Ala-84 form a helical membrane-spanning segment. Topologically, residues Glu-85–Asp-88 are periplasmic. A helical membrane pass occupies residues Ile-89–Ala-108. Residues Lys-109 to Glu-119 are Cytoplasmic-facing.

The protein resides in the cell inner membrane. This Escherichia coli O6:H1 (strain CFT073 / ATCC 700928 / UPEC) protein is Inner membrane protein YijD (yijD).